The chain runs to 327 residues: Serpentine receptor class gamma-2 (327 aa).

The next 6 membrane-spanning stretches (helical) occupy residues 35–55 (LVQF…LYIL), 70–90 (ILFI…IFFA), 157–177 (MKYA…NIII), 181–203 (LPVY…ATMT), 244–264 (IASF…SLFA), and 277–297 (FLLP…MVMA).

This sequence belongs to the nematode receptor-like protein srg family.

It is found in the membrane. The sequence is that of Serpentine receptor class gamma-2 (srg-2) from Caenorhabditis elegans.